Reading from the N-terminus, the 314-residue chain is Adenosine receptor A3 (314 aa).

Residues 1-14 are Extracellular-facing; that stretch reads MAVNGTALLLANVT. N-linked (GlcNAc...) asparagine glycosylation is found at asparagine 4 and asparagine 12. A helical transmembrane segment spans residues 15-37; it reads YITVEILIGLCAIVGNVLVIWVV. Topologically, residues 38–48 are cytoplasmic; the sequence is KLNPSLQTTTF. A helical transmembrane segment spans residues 49-72; that stretch reads YFIVSLALADIAVGVLVMPLAIVI. The Extracellular portion of the chain corresponds to 73-84; that stretch reads SLGITIQFYNCL. Cysteine 83 and cysteine 166 are disulfide-bonded. The chain crosses the membrane as a helical span at residues 85–106; it reads FMTCLLLIFTHASIMSLLAIAV. The Cytoplasmic portion of the chain corresponds to 107–126; the sequence is DRYLRVKLTVRYRRVTTQRR. Residues 127–148 traverse the membrane as a helical segment; it reads IWLALGLCWLVSFLVGLTPMFG. The Extracellular segment spans residues 149 to 177; that stretch reads WNMKLTSEHQRNVTFLSCQFSSVMRMDYM. A glycan (N-linked (GlcNAc...) asparagine) is linked at asparagine 160. The helical transmembrane segment at 178 to 198 threads the bilayer; that stretch reads VYFSFFTWILIPLVVMCAIYL. Topologically, residues 199 to 231 are cytoplasmic; it reads DIFYVIRNKLNQNFSSSKETGAFYGREFKTAKS. The chain crosses the membrane as a helical span at residues 232–255; the sequence is LFLVLFLFAFSWLPLSIINCITYF. Residues 256–261 lie on the Extracellular side of the membrane; that stretch reads HGEVPQ. The helical transmembrane segment at 262 to 284 threads the bilayer; sequence IILYLGILLSHANSMMNPIVYAY. Residues 285 to 314 lie on the Cytoplasmic side of the membrane; sequence KIKKFKETYLLIFKTYMICQSSDSLDSSTE. The S-palmitoyl cysteine moiety is linked to residue cysteine 303.

Belongs to the G-protein coupled receptor 1 family.

The protein resides in the cell membrane. Its function is as follows. Receptor for adenosine. The activity of this receptor is mediated by G proteins which inhibits adenylyl cyclase. This is Adenosine receptor A3 (ADORA3) from Canis lupus familiaris (Dog).